The primary structure comprises 740 residues: Ion-translocating oxidoreductase complex subunit C (740 aa).

4Fe-4S ferredoxin-type domains are found at residues 369–397 and 407–436; these read GEPQ…QQLY and KATT…VQYF. Positions 377, 380, 383, 387, 416, 419, 422, and 426 each coordinate [4Fe-4S] cluster. Positions 602 to 714 are disordered; that stretch reads KLEQQQANAE…NAEPEEQIDP (113 aa). Positions 605 to 615 are enriched in low complexity; sequence QQQANAEPEQQ.

Belongs to the 4Fe4S bacterial-type ferredoxin family. RnfC subfamily. As to quaternary structure, the complex is composed of six subunits: RsxA, RsxB, RsxC, RsxD, RsxE and RsxG. Requires [4Fe-4S] cluster as cofactor.

Its subcellular location is the cell inner membrane. Part of a membrane-bound complex that couples electron transfer with translocation of ions across the membrane. Required to maintain the reduced state of SoxR. The chain is Ion-translocating oxidoreductase complex subunit C from Escherichia coli O17:K52:H18 (strain UMN026 / ExPEC).